The chain runs to 363 residues: S-adenosylmethionine:tRNA ribosyltransferase-isomerase (363 aa).

It belongs to the QueA family. Monomer.

The protein resides in the cytoplasm. The enzyme catalyses 7-aminomethyl-7-carbaguanosine(34) in tRNA + S-adenosyl-L-methionine = epoxyqueuosine(34) in tRNA + adenine + L-methionine + 2 H(+). The protein operates within tRNA modification; tRNA-queuosine biosynthesis. In terms of biological role, transfers and isomerizes the ribose moiety from AdoMet to the 7-aminomethyl group of 7-deazaguanine (preQ1-tRNA) to give epoxyqueuosine (oQ-tRNA). The sequence is that of S-adenosylmethionine:tRNA ribosyltransferase-isomerase from Brucella anthropi (strain ATCC 49188 / DSM 6882 / CCUG 24695 / JCM 21032 / LMG 3331 / NBRC 15819 / NCTC 12168 / Alc 37) (Ochrobactrum anthropi).